A 102-amino-acid chain; its full sequence is Large ribosomal subunit protein bL21 (102 aa).

This sequence belongs to the bacterial ribosomal protein bL21 family. As to quaternary structure, part of the 50S ribosomal subunit. Contacts protein L20.

Functionally, this protein binds to 23S rRNA in the presence of protein L20. In Bifidobacterium longum subsp. infantis (strain ATCC 15697 / DSM 20088 / JCM 1222 / NCTC 11817 / S12), this protein is Large ribosomal subunit protein bL21.